The following is a 361-amino-acid chain: Phosphoserine aminotransferase (361 aa).

An L-glutamate-binding site is contributed by arginine 43. Pyridoxal 5'-phosphate-binding positions include 77–78 (AS), tryptophan 103, threonine 153, aspartate 173, and glutamine 196. Position 197 is an N6-(pyridoxal phosphate)lysine (lysine 197). A pyridoxal 5'-phosphate-binding site is contributed by 238-239 (NT).

Belongs to the class-V pyridoxal-phosphate-dependent aminotransferase family. SerC subfamily. In terms of assembly, homodimer. It depends on pyridoxal 5'-phosphate as a cofactor.

The protein localises to the cytoplasm. It catalyses the reaction O-phospho-L-serine + 2-oxoglutarate = 3-phosphooxypyruvate + L-glutamate. It carries out the reaction 4-(phosphooxy)-L-threonine + 2-oxoglutarate = (R)-3-hydroxy-2-oxo-4-phosphooxybutanoate + L-glutamate. It participates in amino-acid biosynthesis; L-serine biosynthesis; L-serine from 3-phospho-D-glycerate: step 2/3. Its pathway is cofactor biosynthesis; pyridoxine 5'-phosphate biosynthesis; pyridoxine 5'-phosphate from D-erythrose 4-phosphate: step 3/5. Functionally, catalyzes the reversible conversion of 3-phosphohydroxypyruvate to phosphoserine and of 3-hydroxy-2-oxo-4-phosphonooxybutanoate to phosphohydroxythreonine. This Pseudomonas syringae pv. tomato (strain ATCC BAA-871 / DC3000) protein is Phosphoserine aminotransferase.